The chain runs to 348 residues: Putative transport protein HI_0338 (348 aa).

9 helical membrane passes run 7–27 (LHRT…VKLA), 28–48 (AEIV…SPII), 60–80 (LAIT…VGLI), 139–159 (VLLN…VVIF), 196–216 (VIGY…GVFI), 223–243 (VQYA…PNIG), 245–265 (IIAA…GIGF), 267–287 (VAIG…PKMM), and 296–316 (LVVF…GMLL).

It belongs to the autoinducer-2 exporter (AI-2E) (TC 2.A.86) family.

Its subcellular location is the cell membrane. This chain is Putative transport protein HI_0338, found in Haemophilus influenzae (strain ATCC 51907 / DSM 11121 / KW20 / Rd).